The following is a 236-amino-acid chain: MSEITQLFQYNTLGALMAGLYEGTMTIGELLKHGDLGIGTLDSIDGELIVLDGKAYQAKGDKTIVELTDDIKVPYAAVVPHQAEVVFKQKFTVSDKELEDRIESYFDGQNLFRSIKITGKFPKMHVRMIPRAKSGTKFVEVSQNQPEYTEENIKGTIVGIWTPEMFHGVSVAGYHLHFISEDFTFGGHVLDFIIDNGTVEIGAIDQLNQSFPVQDRKFLFADLDIEALKKDIDVAE.

It belongs to the alpha-acetolactate decarboxylase family.

It catalyses the reaction (2S)-2-acetolactate + H(+) = (R)-acetoin + CO2. It functions in the pathway polyol metabolism; (R,R)-butane-2,3-diol biosynthesis; (R,R)-butane-2,3-diol from pyruvate: step 2/3. Functionally, converts acetolactate into acetoin. In Lactococcus lactis subsp. cremoris (strain MG1363), this protein is Alpha-acetolactate decarboxylase (aldB).